The following is a 395-amino-acid chain: Elongation factor Ts, mitochondrial (395 aa).

A mitochondrion-targeting transit peptide spans 1–63 (MAFARAVRRP…RGFGNFIRSF (63 aa)).

Belongs to the EF-Ts family.

Its subcellular location is the mitochondrion. Functionally, associates with the EF-Tu.GDP complex and induces the exchange of GDP to GTP. It remains bound to the aminoacyl-tRNA.EF-Tu.GTP complex up to the GTP hydrolysis stage on the ribosome. The polypeptide is Elongation factor Ts, mitochondrial (Arabidopsis thaliana (Mouse-ear cress)).